A 180-amino-acid chain; its full sequence is Adenine phosphoribosyltransferase (180 aa).

It belongs to the purine/pyrimidine phosphoribosyltransferase family. In terms of assembly, homodimer.

It localises to the cytoplasm. The enzyme catalyses AMP + diphosphate = 5-phospho-alpha-D-ribose 1-diphosphate + adenine. The protein operates within purine metabolism; AMP biosynthesis via salvage pathway; AMP from adenine: step 1/1. Functionally, catalyzes a salvage reaction resulting in the formation of AMP, that is energically less costly than de novo synthesis. The chain is Adenine phosphoribosyltransferase from Agrobacterium fabrum (strain C58 / ATCC 33970) (Agrobacterium tumefaciens (strain C58)).